Consider the following 1705-residue polypeptide: MELSCSEAPLYGQMMIYAKFDKNVYLPEDAEFYFTYDGSHQRHVMIAERIEDNVLQSSVPGHGLQETVTVSVCLCSEGYSPVTMGSGSVTYVDNMACRLARLLVTQANRLTACSHQTLLTPFALTAGALPALDEELVLALTHLELPLEWTVLGSSSLEVSSHRESLLHLAMRWGLAKLSQFFLCLPGGVQALALPNEEGATPLDLALREGHSKLVEDVTNFQGRWSPSFSRVQLSEEASLHYIHSSETLTLTLNHTAEHLLEADIKLFRKYFWDRAFLVKAFEPEARPEERTAMPSSGAETEEEIKNSVSSRSAAEKEDIKRVKSLVVQHNEHEDQHSLDLDRSFDILKKSKPPSTLLAAGRLSDMLNGGDEVYANCMVIDQVGDLDISYINIEGITATTSPESRGCTLWPQSSKHTLPTETSPSVYPLSENVEGTAHTEAQQSFMSPSSSCASNLNLSFGWHGFEKEQSHLKKRSSSLDALDADSEGEGHSEPSHICYTPGSQSSSRTGIPSGDELDSFETNTEPDFNISRAESLPLSSNLQSKESLLSGVRSRSYSCSSPKISLGKTRLVRELTVCSSSEEQRAYSLSEPPRENRIQEEEWDKYIIPAKSESEKYKVSRTFSFLMNRMTSPRNKSKTKSKDAKDKEKLNRHQFAPGTFSGVLQCLVCDKTLLGKESLQCSNCNANVHKGCKDAAPACTKKFQEKYNKNKPQTILGNSSFRDIPQPGLSLHPSSSVPVGLPTGRRETVGQVHPLSRSVPGTTLESFRRSATSLESESDHNSCRSRSHSDELLQSMGSSPSTESFIMEDVVDSSLWSDLSSDAQEFEAESWSLVVDPSFCNRQEKDVIKRQDVIFELMQTEMHHIQTLFIMSEIFRKGMKEELQLDHSTVDKIFPCLDELLEIHRHFFYSMKERRQESCAGSDRNFVIDRIGDILVQQFSEENASKMKKIYGEFCCHHKEAVNLFKELQQNKKFQNFIKLRNSNLLARRRGIPECILLVTQRITKYPVLVERILQYTKERTEEHKDLRKALCLIKDMIATVDLKVNEYEKNQKWLEILNKIENKTYTKLKNGHVFRKQALMSEERTLLYDGLVYWKTATGRFKDILALLLTDVLLFLQEKDQKYIFAAVDQKPSVISLQKLIAREVANEERGMFLISASSAGPEMYEIHTNSKEERNNWMRRIQQAVESCPEEKGGRTSESDEDKRKAEARVAKIQQCQEILTNQDQQICAYLEEKLHIYAELGELSGFEDVHLEPHLLIKPDPGEPPQAASLLAAALKEAESLQVAVKASQMGAVSQSCEDSCGDSVLADTLSSHDVPGSPTASLVTGGREGRGCSDVDPGIQGVVTDLAVSDAGEKVECRNFPGSSQSEIIQAIQNLTRLLYSLQAALTIQDSHIEIHRLVLQQQEGLSLGHSILRGGPLQDQKSRDADRQHEELANVHQLQHQLQQEQRRWLRRCEQQQRAQATRESWLQERERECQSQEELLLRSRGELDLQLQEYQHSLERLREGQRLVEREQARMRAQQSLLGHWKHGRQRSLPAVLLPGGPEVMELNRSESLCHENSFFINEALVQMSFNTFNKLNPSVIHQDATYPTTQSHSDLVRTSEHQVDLKVDPSQPSNVSHKLWTAAGSGHQILPFHESSKDSCKNDLDTSHTESPTPHDSNSHRPQLQAFITEAKLNLPTRTMTRQDGETGDGAKENIVYL.

Disordered regions lie at residues arginine 287–glutamate 316 and lysine 473–threonine 524. Residues serine 313 and serine 478 each carry the phosphoserine modification. The span at proline 501–glycine 510 shows a compositional bias: polar residues. Position 624 is a phosphoserine (serine 624). The disordered stretch occupies residues methionine 630–lysine 649. Positions lysine 640–lysine 649 are enriched in basic and acidic residues. The Phorbol-ester/DAG-type zinc-finger motif lies at arginine 652–cysteine 699. 2 stretches are compositionally biased toward polar residues: residues asparagine 710–phenylalanine 721 and valine 759–glutamate 775. The tract at residues asparagine 710–proline 800 is disordered. Positions glutamate 777–glutamate 791 are enriched in basic and acidic residues. One can recognise a DH domain in the interval lysine 849–lysine 1044. One can recognise a PH domain in the interval threonine 1086–glutamate 1188. Residues valine 1187–lysine 1207 are disordered. Over residues proline 1191–lysine 1207 the composition is skewed to basic and acidic residues. The interaction with PTK2/FAK1; required for regulation of axonal branching and synapse formation stretch occupies residues alanine 1295–cysteine 1304. The segment at threonine 1312–valine 1339 is disordered. Residues isoleucine 1372 to leucine 1383 are mediates cytoplasmic retention and interaction with YWHAH. Positions glutamine 1425 to leucine 1705 are interaction with microtubules. Residues arginine 1488–glutamine 1525 adopt a coiled-coil conformation. An RNA-binding region spans residues glutamine 1496 to leucine 1527. A Phosphoserine modification is found at serine 1538. The interval phenylalanine 1566–phenylalanine 1579 is mediates cytoplasmic retention and interaction with MAPK8IP1. Positions proline 1638–leucine 1705 are disordered. Residues glutamate 1641–histidine 1655 show a composition bias toward basic and acidic residues. A compositionally biased stretch (polar residues) spans threonine 1656–proline 1669. The segment covering threonine 1688–lysine 1699 has biased composition (basic and acidic residues).

As to quaternary structure, homooligomer; forms cytoplasmic aggregates. Forms a complex with MAPK8 and MAPK8IP1. Interacts with RHOA. Interacts with microtubules. Interacts with YWHAE and YWHAH. Interacts with PTK2/FAK1. Interacts with NEFL. Interacts with CTNND2; prevents interaction with RHOA. In terms of processing, phosphorylated on tyrosine upon stimulation of cells by laminin.

The protein resides in the cytoplasm. It localises to the cell membrane. Functionally, functions as a RHOA-specific guanine nucleotide exchange factor regulating signaling pathways downstream of integrins and growth factor receptors. Functions in axonal branching, synapse formation and dendritic morphogenesis. Also functions in focal adhesion formation, cell motility and B-lymphocytes activation. May regulate NEFL expression and aggregation and play a role in apoptosis. This chain is Rho guanine nucleotide exchange factor 28 (ARHGEF28), found in Homo sapiens (Human).